The primary structure comprises 342 residues: MSKIIQAFHSSNKNYTPIWFMRQAGRYLPEYQVLKRTTNSFFELCYNPIKAAEATLQPIARFDFDAAIIFSDILVLPDSLGINIRFINNLCPTAEKIPNLLDLQKSKIQNTKISKVYEAIDIVRKKLNKKKSLIGFCGGPWTVLTYILGYNSRNTPKFHEIKSNNKHELIVDSINILTKHTIDHLANQILAGADIVQIFDSWAGILPYQEFSEYVIKPTSNIVKTLKEKFPHIKIIGFPKGAGKLYHKYTKETNVDGISCDYDLQLDEMLKLQKNVLVQGNLNPNTILSKNSKIIEESVIKIMDTLSNNRFIFNLGHGILPETPIKNVELIVKLVKNYHSSE.

Substrate contacts are provided by residues 22–26 (RQAGR), phenylalanine 41, aspartate 72, tyrosine 146, serine 201, and histidine 317.

Belongs to the uroporphyrinogen decarboxylase family. As to quaternary structure, homodimer.

The protein localises to the cytoplasm. It catalyses the reaction uroporphyrinogen III + 4 H(+) = coproporphyrinogen III + 4 CO2. It functions in the pathway porphyrin-containing compound metabolism; protoporphyrin-IX biosynthesis; coproporphyrinogen-III from 5-aminolevulinate: step 4/4. In terms of biological role, catalyzes the decarboxylation of four acetate groups of uroporphyrinogen-III to yield coproporphyrinogen-III. The sequence is that of Uroporphyrinogen decarboxylase from Orientia tsutsugamushi (strain Boryong) (Rickettsia tsutsugamushi).